The chain runs to 435 residues: Serine--tRNA ligase (435 aa).

241–243 (TAE) serves as a coordination point for L-serine. 272 to 274 (RAE) lines the ATP pocket. Position 295 (glutamate 295) interacts with L-serine. ATP is bound at residue 359-362 (EISS). Serine 395 contacts L-serine.

This sequence belongs to the class-II aminoacyl-tRNA synthetase family. Type-1 seryl-tRNA synthetase subfamily. As to quaternary structure, homodimer. The tRNA molecule binds across the dimer.

The protein localises to the cytoplasm. It catalyses the reaction tRNA(Ser) + L-serine + ATP = L-seryl-tRNA(Ser) + AMP + diphosphate + H(+). It carries out the reaction tRNA(Sec) + L-serine + ATP = L-seryl-tRNA(Sec) + AMP + diphosphate + H(+). The protein operates within aminoacyl-tRNA biosynthesis; selenocysteinyl-tRNA(Sec) biosynthesis; L-seryl-tRNA(Sec) from L-serine and tRNA(Sec): step 1/1. Functionally, catalyzes the attachment of serine to tRNA(Ser). Is also able to aminoacylate tRNA(Sec) with serine, to form the misacylated tRNA L-seryl-tRNA(Sec), which will be further converted into selenocysteinyl-tRNA(Sec). The protein is Serine--tRNA ligase of Haemophilus ducreyi (strain 35000HP / ATCC 700724).